Reading from the N-terminus, the 277-residue chain is F420-dependent methylenetetrahydromethanopterin dehydrogenase (277 aa).

The protein belongs to the MTD family.

It carries out the reaction 5,10-methylenetetrahydromethanopterin + oxidized coenzyme F420-(gamma-L-Glu)(n) + 2 H(+) = 5,10-methenyl-5,6,7,8-tetrahydromethanopterin + reduced coenzyme F420-(gamma-L-Glu)(n). The protein operates within one-carbon metabolism; methanogenesis from CO(2); 5,10-methylene-5,6,7,8-tetrahydromethanopterin from 5,10-methenyl-5,6,7,8-tetrahydromethanopterin (coenzyme F420 route): step 1/1. In terms of biological role, catalyzes the reversible reduction of methenyl-H(4)MPT(+) to methylene-H(4)MPT. The polypeptide is F420-dependent methylenetetrahydromethanopterin dehydrogenase (Methanococcus maripaludis (strain DSM 14266 / JCM 13030 / NBRC 101832 / S2 / LL)).